The sequence spans 866 residues: MSTKEIKETPLMKQYNEIKRKYPDACLLFRVGDFYETFGDDAVRASKILGITLTKRGAGSPTETALAGFPHHSINTYLPKLVKAGLRVAICDQLEDPKMTKTIVKRGVTELVTPGVSMNDEVLNSKTNNFLASIYFGKKIIGVSFLDVSTGEFLTSEGNEEYIDKLLQNFSPSEILVPKQNKGDFKEKFGDNFHAFYLEDWVYKEDYATETLTNHFQTNSLKGFGIEELASGIIASGAILYYLSETQHNKIQHITSIHRIAEDAYVWMDRFTIRNLELYHSYNPNAVTLLDIIDKTLSPMGGRMLKRWLALPLKNATIIKSRHEVVAYFKDHQEILQKVQNQIKQISDLERLISKVAAGRISPREIIYLKESLDAIIPIKELALKSPQEAVKVIGDSLHSCDLLREKIKTTLNQEAPVAISKGNAIAAGIHPELDELRGISALGKEYLEGIEKRESEKTGISSLKISFNNVFGYYIEVRNTHKDKVPTEWIRKQTLVNAERYITEELKEYETKILGAEEKIQQIENQLFEQLVSWIATYIKPVQLNANLIAQLDCLISFTQLAIDNKYVCPQINDSFALDIKNGRHPVIEKQLPIGVPYIANDVYLDRDTQQLIMITGPNMSGKSAILRQTALIVLLAQMGSFVPAESVQMGIVDKIFTRVGASDNISMGESTFMVEMNETASILNNISDRSLVLLDEIGRGTSTYDGVSIAWAIAEFLHENPAQPKTLFATHYHELNEMTESLPRIQNYNVSVKELKDTVLFIRKLVKGGSAHSFGIHVAKMAGMPQIVLQKAEKILKKLEKNHSAEALSGTKGNKDDIQLSIFNLDDPLLEEIKEEILNLDINTLTPVEALMKLNEIKRMLSKK.

618–625 serves as a coordination point for ATP; the sequence is GPNMSGKS.

This sequence belongs to the DNA mismatch repair MutS family.

Its function is as follows. This protein is involved in the repair of mismatches in DNA. It is possible that it carries out the mismatch recognition step. This protein has a weak ATPase activity. The protein is DNA mismatch repair protein MutS of Flavobacterium psychrophilum (strain ATCC 49511 / DSM 21280 / CIP 103535 / JIP02/86).